Consider the following 406-residue polypeptide: MSGAPTAGAALMLCAATAVLLSAQGGPVQSKSPRFASWDEMNVLAHGLLQLGQGLREHAERTRSQLSALERRLSACGSACQGTEGSTDLPLAPESRVDPEVLHSLQTQLKAQNSRIQQLFHKVAQQQRHLEKQHLRIQHLQSQFGLLDHKHLDHEVAKPARRKRLPEMAQPVDPAHNVSRLHRLPRDCQELFQVGERQSGLFEIQPQGSPPFLVNCKMTSDGGWTVIQRRHDGSVDFNRPWEAYKAGFGDPHGEFWLGLEKVHSITGDRNSRLAVQLRDWDGNAELLQFSVHLGGEDTAYSLQLTAPVAGQLGATTVPPSGLSVPFSTWDQDHDLRRDKNCAKSLSGGWWFGTCSHSNLNGQYFRSIPQQRQKLKKGIFWKTWRGRYYPLQATTMLIQPMAAEAAS.

The first 25 residues, 1–25, serve as a signal peptide directing secretion; that stretch reads MSGAPTAGAALMLCAATAVLLSAQG. A coiled-coil region spans residues 100-143; it reads EVLHSLQTQLKAQNSRIQQLFHKVAQQQRHLEKQHLRIQHLQSQ. N177 is a glycosylation site (N-linked (GlcNAc...) asparagine). A Fibrinogen C-terminal domain is found at 179–401; the sequence is SRLHRLPRDC…ATTMLIQPMA (223 aa). Disulfide bonds link C188-C216 and C341-C354.

Homooligomer; disulfide-linked via Cys residues in the N-terminal part of the protein. The homooligomer undergoes proteolytic processing to release the ANGPTL4 C-terminal chain, which circulates as a monomer. The homooligomer unprocessed form is able to interact with the extracellular matrix. N-glycosylated. In terms of processing, forms disulfide-linked dimers and tetramers. Post-translationally, cleaved into a smaller N-terminal chain and a larger chain that contains the fibrinogen C-terminal domain; both cleaved and uncleaved forms are detected in the extracellular space. The cleaved form is not present within the cell. In terms of tissue distribution, detected in blood plasma (at protein level). Detected in liver. Detected in white fat tissue and placenta. Expressed at high levels in the placenta, heart, liver, muscle, pancreas and lung but expressed poorly in the brain and kidney.

It is found in the secreted. The protein resides in the extracellular space. Its subcellular location is the extracellular matrix. In terms of biological role, mediates inactivation of the lipoprotein lipase LPL, and thereby plays a role in the regulation of triglyceride clearance from the blood serum and in lipid metabolism. May also play a role in regulating glucose homeostasis and insulin sensitivity. Inhibits proliferation, migration, and tubule formation of endothelial cells and reduces vascular leakage. Upon heterologous expression, inhibits the adhesion of endothelial cell to the extracellular matrix (ECM), and inhibits the reorganization of the actin cytoskeleton, formation of actin stress fibers and focal adhesions in endothelial cells that have adhered to ANGPTL4-containing ECM (in vitro). Depending on context, may modulate tumor-related angiogenesis. Functionally, mediates inactivation of the lipoprotein lipase LPL, and thereby plays an important role in the regulation of triglyceride clearance from the blood serum and in lipid metabolism. Has higher activity in LPL inactivation than the uncleaved protein. The chain is Angiopoietin-related protein 4 (ANGPTL4) from Homo sapiens (Human).